Reading from the N-terminus, the 878-residue chain is DNA mismatch repair protein MutS (878 aa).

ATP is bound at residue 626-633; the sequence is GPNMAGKS.

This sequence belongs to the DNA mismatch repair MutS family.

Its function is as follows. This protein is involved in the repair of mismatches in DNA. It is possible that it carries out the mismatch recognition step. This protein has a weak ATPase activity. The polypeptide is DNA mismatch repair protein MutS (Paracoccus denitrificans (strain Pd 1222)).